Consider the following 598-residue polypeptide: Auxin response factor 22 (598 aa).

A DNA-binding region (TF-B3) is located at residues 124–226; it reads NSFTKVLTAS…ELRVGIRRAG (103 aa). The region spanning 509–590 is the PB1 domain; it reads RTCTKVQMQG…MVKKILIFKR (82 aa).

It belongs to the ARF family. As to quaternary structure, homodimers and heterodimers.

The protein resides in the nucleus. In terms of biological role, auxin response factors (ARFs) are transcriptional factors that bind specifically to the DNA sequence 5'-TGTCTC-3' found in the auxin-responsive promoter elements (AuxREs). Could act as transcriptional activator or repressor. Formation of heterodimers with Aux/IAA proteins may alter their ability to modulate early auxin response genes expression. The protein is Auxin response factor 22 (ARF22) of Arabidopsis thaliana (Mouse-ear cress).